Here is a 227-residue protein sequence, read N- to C-terminus: Uracil-DNA glycosylase 2 (227 aa).

The Proton acceptor role is filled by Asp-67.

This sequence belongs to the uracil-DNA glycosylase (UDG) superfamily. UNG family.

It is found in the cytoplasm. It catalyses the reaction Hydrolyzes single-stranded DNA or mismatched double-stranded DNA and polynucleotides, releasing free uracil.. In terms of biological role, excises uracil residues from the DNA which can arise as a result of misincorporation of dUMP residues by DNA polymerase or due to deamination of cytosine. The chain is Uracil-DNA glycosylase 2 (ung2) from Streptomyces avermitilis (strain ATCC 31267 / DSM 46492 / JCM 5070 / NBRC 14893 / NCIMB 12804 / NRRL 8165 / MA-4680).